Consider the following 511-residue polypeptide: Probable lipid II flippase MurJ (511 aa).

The next 13 helical transmembrane spans lie at 31–51, 90–110, 130–150, 159–179, 182–202, 237–257, 271–291, 314–334, 354–374, 383–403, 407–427, 443–463, and 481–501; these read IFGAGMATDAFFVAFKLPNLL, LLTLALAVVTVAGMLAAPWVI, LLKITFPYILLISLASLVGAI, IPAFAPTLLNISMIGFALFAA, FNPPVLALAWAVTVGGVLQLV, ILGVSVSQISLIINTIFASFL, LMEFPSGVLGVALGTILLPSL, CFLLALPSAVALGILSGPLTV, LIAYSVGLIGLIVVKVLAPGF, PVKIAIVTLILTQLMNLAFIG, HAGLSLSIGLAACLNASLLYW, AFLLRLVVAVLVMSGVLLGML, and LMAVVLAGIAAYFAALAVLGF.

The protein belongs to the MurJ/MviN family.

It localises to the cell inner membrane. Its pathway is cell wall biogenesis; peptidoglycan biosynthesis. Functionally, involved in peptidoglycan biosynthesis. Transports lipid-linked peptidoglycan precursors from the inner to the outer leaflet of the cytoplasmic membrane. The polypeptide is Probable lipid II flippase MurJ (Escherichia coli O157:H7).